The primary structure comprises 520 residues: Ubiquitin carboxyl-terminal hydrolase 3 (520 aa).

The residue at position 1 (methionine 1) is an N-acetylmethionine. Residues 1-121 form a UBP-type zinc finger; sequence MECPHLSSSV…QKVREHLQNL (121 aa). Zn(2+) is bound by residues cysteine 3, histidine 5, cysteine 29, cysteine 32, cysteine 41, cysteine 44, cysteine 49, histidine 56, histidine 60, histidine 82, cysteine 95, and cysteine 98. Residues 159–511 form the USP domain; that stretch reads TGLRNLGNTC…KAYILFYVEH (353 aa). Catalysis depends on cysteine 168, which acts as the Nucleophile. The active-site Proton acceptor is the histidine 471.

This sequence belongs to the peptidase C19 family. USP3 subfamily. As to quaternary structure, interacts (via UBP-type domain) with H2A; the interaction is less efficient than with monoubiquitinated H2A. In terms of tissue distribution, expressed in all tissues examined, with strongest expression in pancreas.

It is found in the nucleus. The protein localises to the cytoplasm. The catalysed reaction is Thiol-dependent hydrolysis of ester, thioester, amide, peptide and isopeptide bonds formed by the C-terminal Gly of ubiquitin (a 76-residue protein attached to proteins as an intracellular targeting signal).. Functionally, deubiquitinase that plays a role in several cellular processes including transcriptional regulation, cell cycle progression or innate immunity. In response to DNA damage, deubiquitinates monoubiquitinated target proteins such as histone H2A and H2AX and thereby counteracts RNF168- and RNF8-mediated ubiquitination. In turn, participates in the recruitment of DNA damage repair factors to DNA break sites. Required for proper progression through S phase and subsequent mitotic entry. Acts as a positive regulator of TP53 by deubiquitinating and stabilizing it to promote normal cell proliferation and transformation. Participates in establishing tolerance innate immune memory through non-transcriptional feedback. Mechanistically, negatively regulates TLR-induced NF-kappa-B signaling by targeting and removing the 'Lys-63'-linked polyubiquitin chains on MYD88. Negatively regulates the activation of type I interferon signaling by mediating 'Lys-63'-linked polyubiquitin chains on RIGI and IFIH1. Also deubiquinates ASC/PYCARD, the central adapter mediating the assembly and activation of most inflammasomes, and thereby promotes inflammasome activation. This Homo sapiens (Human) protein is Ubiquitin carboxyl-terminal hydrolase 3 (USP3).